Consider the following 202-residue polypeptide: Urease accessory protein UreG (202 aa).

11 to 18 (GPVGSGKT) contributes to the GTP binding site.

It belongs to the SIMIBI class G3E GTPase family. UreG subfamily. Homodimer. UreD, UreF and UreG form a complex that acts as a GTP-hydrolysis-dependent molecular chaperone, activating the urease apoprotein by helping to assemble the nickel containing metallocenter of UreC. The UreE protein probably delivers the nickel.

The protein resides in the cytoplasm. Facilitates the functional incorporation of the urease nickel metallocenter. This process requires GTP hydrolysis, probably effectuated by UreG. In Magnetococcus marinus (strain ATCC BAA-1437 / JCM 17883 / MC-1), this protein is Urease accessory protein UreG.